The primary structure comprises 347 residues: Virulence plasmid protein pGP2-D (347 aa).

This Chlamydia psittaci (Chlamydophila psittaci) protein is Virulence plasmid protein pGP2-D.